The sequence spans 156 residues: MKTFVFHIFIFALVAFASASRDSAKKIGSQYEHYATCLTENDAAADDIFTILDITSGHHKNENEHDKQHKNGCVMHCLLEKDGLMTGADYHEEKIREDYIKETGAQPGDKRLEALDTCMNETKDMTDKCDKSLLLVACVLIAEDSLATSTEASTEA.

An N-terminal signal peptide occupies residues methionine 1 to alanine 19. Cystine bridges form between cysteine 37–cysteine 77, cysteine 73–cysteine 129, and cysteine 118–cysteine 138.

This sequence belongs to the PBP/GOBP family. Homodimer.

It localises to the secreted. In terms of biological role, colony queen number, a major feature of social organization, is associated with worker genotype for Gp-9. Colonies are headed by either a single reproductive queen (monogyne form) or multiple queens (polygyne form). Differences in worker Gp-9 genotypes between social forms may cause differences in workers' abilities to recognize queens and regulate their numbers. The sequence is that of Pheromone-binding protein Gp-9 from Solenopsis globularia littoralis (Fire ant).